Reading from the N-terminus, the 272-residue chain is Soluble interferon gamma receptor OPG193 (272 aa).

Residues 1-13 (MRYIIILAVLFIN) form the signal peptide. Residues N42, N150, and N267 are each glycosylated (N-linked (GlcNAc...) asparagine; by host).

The protein belongs to the type II cytokine receptor family. In terms of assembly, homodimer. Interacts with host IFNG.

It is found in the secreted. Counteracts the antiviral effects of host IFN-gamma. Acts as a soluble IFN-gamma receptor and thus inhibits the interaction between host IFN-gamma and its receptor. The chain is Soluble interferon gamma receptor OPG193 (OPG193) from Bos taurus (Bovine).